The following is a 65-amino-acid chain: Large ribosomal subunit protein bL35 (65 aa).

The protein belongs to the bacterial ribosomal protein bL35 family.

The polypeptide is Large ribosomal subunit protein bL35 (Prochlorococcus marinus subsp. pastoris (strain CCMP1986 / NIES-2087 / MED4)).